We begin with the raw amino-acid sequence, 375 residues long: Odorant receptor 10 (375 aa).

Helical transmembrane passes span 32–52, 58–78, 125–145, 167–187, 250–270, and 279–299; these read ISII…GHSW, VIIK…TLIL, NLAL…FTGV, IIYL…IPFT, YICF…LFLL, and IVIV…FYWH.

This sequence belongs to the insect chemoreceptor superfamily. Heteromeric odorant receptor channel (TC 1.A.69) family. As to expression, expressed in female antenna, maxillary palp and proboscis. Expressed in female body. Expressed in male tissues.

The protein resides in the cell membrane. Odorant receptor which complexes with Orco, a coreceptor, to form odorant-sensing units, providing sensitive and prolonged odorant signaling and calcium permeability. Can sense indole, 1-octen-3-ol, 3-methyindole and an insect repellent DEET. The polypeptide is Odorant receptor 10 (Aedes albopictus (Asian tiger mosquito)).